An 830-amino-acid chain; its full sequence is Prolactin receptor (830 aa).

Positions 1–23 (MKQKLRSSVQIILLFALTAVGLT) are cleaved as a signal peptide. Residues 24 to 439 (GQSYPGKPKI…QIPTDFRIKD (416 aa)) lie on the Extracellular side of the membrane. Fibronectin type-III domains are found at residues 30-128 (KPKI…VQPD), 129-228 (APVN…IPNG), 231-331 (PPEK…IVQT), and 333-434 (PPVN…IPTD). A disulfide bridge links Cys36 with Cys46. A glycan (N-linked (GlcNAc...) asparagine) is linked at Asn59. An intrachain disulfide couples Cys75 to Cys86. N-linked (GlcNAc...) asparagine glycans are attached at residues Asn91, Asn100, Asn112, Asn132, Asn263, Asn304, Asn316, and Asn336. Zn(2+)-binding residues include Asp415 and His417. The short motif at 420–424 (WSEWS) is the WSXWS motif element. The helical transmembrane segment at 440–460 (MVVWIIVGVLSSLICLVMSWT) threads the bilayer. At 461-830 (MVLKGYRMIA…DPSSFIPAFK (370 aa)) the chain is on the cytoplasmic side. Positions 472 to 480 (ILPPVPGPK) match the Box 1 motif motif.

The protein belongs to the type I cytokine receptor family. Type 1 subfamily.

The protein localises to the membrane. This is a receptor for the anterior pituitary hormone prolactin. The polypeptide is Prolactin receptor (PRLR) (Columba livia (Rock dove)).